The following is a 341-amino-acid chain: Uroporphyrinogen decarboxylase (341 aa).

Substrate contacts are provided by residues 23-27, aspartate 73, tyrosine 147, serine 202, and histidine 318; that span reads RQAGR.

Belongs to the uroporphyrinogen decarboxylase family. As to quaternary structure, homodimer.

Its subcellular location is the cytoplasm. The enzyme catalyses uroporphyrinogen III + 4 H(+) = coproporphyrinogen III + 4 CO2. It functions in the pathway porphyrin-containing compound metabolism; protoporphyrin-IX biosynthesis; coproporphyrinogen-III from 5-aminolevulinate: step 4/4. In terms of biological role, catalyzes the decarboxylation of four acetate groups of uroporphyrinogen-III to yield coproporphyrinogen-III. This is Uroporphyrinogen decarboxylase from Novosphingobium aromaticivorans (strain ATCC 700278 / DSM 12444 / CCUG 56034 / CIP 105152 / NBRC 16084 / F199).